Here is a 200-residue protein sequence, read N- to C-terminus: Oligoribonuclease (200 aa).

Residues 5–169 (MVWIDCEMTG…ADIRESIAEL (165 aa)) enclose the Exonuclease domain. Residue Tyr126 is part of the active site.

This sequence belongs to the oligoribonuclease family.

It is found in the cytoplasm. 3'-to-5' exoribonuclease specific for small oligoribonucleotides. The polypeptide is Oligoribonuclease (Streptomyces coelicolor (strain ATCC BAA-471 / A3(2) / M145)).